A 290-amino-acid chain; its full sequence is Sodium/potassium-transporting ATPase subunit beta-2 (290 aa).

Residues 1–39 (MVIQKEKKSCGQVVEEWKEFVWNPRTHQFMGRTGTSWAF) are Cytoplasmic-facing. The helical; Signal-anchor for type II membrane protein transmembrane segment at 40-67 (ILLFYLVFYGFLTAMFTLTMWVMLQTVS) threads the bilayer. Over 68 to 290 (DHTPKYQDRL…VAFKLRINKT (223 aa)) the chain is Extracellular. Residues Asn-96 and Asn-118 are each glycosylated (N-linked (GlcNAc...) asparagine). Cys-129 and Cys-150 are joined by a disulfide. N-linked (GlcNAc...) asparagine glycosylation occurs at Asn-153. A disulfide bridge links Cys-160 with Cys-177. 3 N-linked (GlcNAc...) asparagine glycosylation sites follow: Asn-193, Asn-197, and Asn-238. Residues 193–289 (NQSMNVTCVG…RVAFKLRINK (97 aa)) form an immunoglobulin-like region. A disulfide bridge connects residues Cys-200 and Cys-261.

Belongs to the X(+)/potassium ATPases subunit beta family. As to quaternary structure, the sodium/potassium-transporting ATPase is composed of a catalytic alpha subunit, an auxiliary non-catalytic beta subunit and an additional regulatory subunit. Interacts with BSG.

The protein localises to the cell membrane. In terms of biological role, this is the non-catalytic component of the active enzyme, which catalyzes the hydrolysis of ATP coupled with the exchange of Na(+) and K(+) ions across the plasma membrane. The exact function of the beta-2 subunit is not known. Functionally, mediates cell adhesion of neurons and astrocytes, and promotes neurite outgrowth. The protein is Sodium/potassium-transporting ATPase subunit beta-2 (ATP1B2) of Bos taurus (Bovine).